A 395-amino-acid polypeptide reads, in one-letter code: Altered inheritance of mitochondria protein 39, mitochondrial (395 aa).

The chain crosses the membrane as a helical span at residues 161–181 (IFGGIFGVIIGYSLIYKVIYL).

Belongs to the AIM39 family.

The protein localises to the mitochondrion membrane. The chain is Altered inheritance of mitochondria protein 39, mitochondrial (AIM39) from Saccharomyces cerevisiae (strain YJM789) (Baker's yeast).